A 1396-amino-acid chain; its full sequence is Probable ATP-dependent RNA helicase spindle-E (1396 aa).

Residues 1–34 (MDEAAGPSTSRTSNLEDVDDEGASLAEEDEEHTK) form a disordered region. A compositionally biased stretch (acidic residues) spans 16–30 (EDVDDEGASLAEEDE). Residues 68–234 (LDKIRSNAVV…FKIPKKSGYL (167 aa)) form the Helicase ATP-binding domain. Residue 81-88 (GATGCGKT) coordinates ATP. Positions 180–183 (DEVH) match the DEAH box motif. In terms of domain architecture, Helicase C-terminal spans 292 to 468 (KGQEFGDSLE…TVVLKAKLLE (177 aa)). The region spanning 885-950 (NFAMGQMVAA…RQLDDSLGQL (66 aa)) is the Tudor domain.

It belongs to the DEAD box helicase family. DEAH subfamily.

It is found in the cytoplasm. It carries out the reaction ATP + H2O = ADP + phosphate + H(+). Its function is as follows. Probable ATP-binding RNA helicase which plays a central role during gametogenesis by repressing transposable elements and preventing their mobilization, which is essential for the germline integrity. Acts via the piRNA metabolic process, which mediates the repression of transposable elements during meiosis by forming complexes composed of piRNAs and Piwi proteins and govern the methylation and subsequent repression of transposons. This is Probable ATP-dependent RNA helicase spindle-E (spn-E) from Culex quinquefasciatus (Southern house mosquito).